We begin with the raw amino-acid sequence, 77 residues long: Translation initiation factor IF-1, chloroplastic (77 aa).

Residues 1 to 71 (MKEQKWIHEG…TRGRIIYRLR (71 aa)) form the S1-like domain.

It belongs to the IF-1 family. As to quaternary structure, component of the 30S ribosomal translation pre-initiation complex which assembles on the 30S ribosome in the order IF-2 and IF-3, IF-1 and N-formylmethionyl-tRNA(fMet); mRNA recruitment can occur at any time during PIC assembly.

It is found in the plastid. Its subcellular location is the chloroplast. Its function is as follows. One of the essential components for the initiation of protein synthesis. Stabilizes the binding of IF-2 and IF-3 on the 30S subunit to which N-formylmethionyl-tRNA(fMet) subsequently binds. Helps modulate mRNA selection, yielding the 30S pre-initiation complex (PIC). Upon addition of the 50S ribosomal subunit IF-1, IF-2 and IF-3 are released leaving the mature 70S translation initiation complex. This chain is Translation initiation factor IF-1, chloroplastic, found in Spinacia oleracea (Spinach).